The primary structure comprises 461 residues: MLKIFNTLTRQKEEFKPIHAGEVGMYVCGITVYDLCHIGHGRTFVAFDVVARYLRFLGYKLKYVRNITDIDDKIIKRANENGESFVALVDRMIAEMHQDFDALNILRPDSEPRATHHIQEIIELTRTLIEKGHAYVADNGDVMFDVPTDPTYGQLSRQDLEQLQAGARVDVVDVKRNPMDFVLWKMSKEGEPSWPSPWGEGRPGWHIECSAMNCKQLGNHFDIHGGGSDLMFPHHENEIAQSTCAHDGEYVNYWMHSGMVMVDREKMSKSLGNFFTVRDVLKYYDAETVRYFLMSGHYRSQLNYSEENLKQARASLERLYTALRGTDKSAAPAGGEAFEARFVEAMNDDFNTPEAYSVLFDMAREVNRLKGEDMTAANAMASHLRKISGVLGLLEQEPDVFLQSGAQADDGEVAEIEALIQQRLDARKAKDWAAADAARDRLAEMGIILEDGPQGTTWRRK.

Cys-28 serves as a coordination point for Zn(2+). The 'HIGH' region motif lies at 30 to 40 (ITVYDLCHIGH). Zn(2+) contacts are provided by Cys-209, His-234, and Glu-238. Residues 266 to 270 (KMSKS) carry the 'KMSKS' region motif. Residue Lys-269 participates in ATP binding.

It belongs to the class-I aminoacyl-tRNA synthetase family. As to quaternary structure, monomer. Zn(2+) is required as a cofactor.

The protein resides in the cytoplasm. The enzyme catalyses tRNA(Cys) + L-cysteine + ATP = L-cysteinyl-tRNA(Cys) + AMP + diphosphate. This is Cysteine--tRNA ligase from Salmonella agona (strain SL483).